Reading from the N-terminus, the 275-residue chain is Formamidopyrimidine-DNA glycosylase (275 aa).

The Schiff-base intermediate with DNA role is filled by proline 2. Glutamate 3 acts as the Proton donor in catalysis. Lysine 58 functions as the Proton donor; for beta-elimination activity in the catalytic mechanism. Residues histidine 91, arginine 109, and arginine 154 each contribute to the DNA site. Residues 240 to 274 (AVYERAGLPCRVCGTPIRRLVQGQRATYFCPSCQK) form an FPG-type zinc finger. The Proton donor; for delta-elimination activity role is filled by arginine 264.

This sequence belongs to the FPG family. In terms of assembly, monomer. Zn(2+) is required as a cofactor.

It carries out the reaction Hydrolysis of DNA containing ring-opened 7-methylguanine residues, releasing 2,6-diamino-4-hydroxy-5-(N-methyl)formamidopyrimidine.. The enzyme catalyses 2'-deoxyribonucleotide-(2'-deoxyribose 5'-phosphate)-2'-deoxyribonucleotide-DNA = a 3'-end 2'-deoxyribonucleotide-(2,3-dehydro-2,3-deoxyribose 5'-phosphate)-DNA + a 5'-end 5'-phospho-2'-deoxyribonucleoside-DNA + H(+). Involved in base excision repair of DNA damaged by oxidation or by mutagenic agents. Acts as a DNA glycosylase that recognizes and removes damaged bases. Has a preference for oxidized purines, such as 7,8-dihydro-8-oxoguanine (8-oxoG). Has AP (apurinic/apyrimidinic) lyase activity and introduces nicks in the DNA strand. Cleaves the DNA backbone by beta-delta elimination to generate a single-strand break at the site of the removed base with both 3'- and 5'-phosphates. The protein is Formamidopyrimidine-DNA glycosylase of Bordetella pertussis (strain Tohama I / ATCC BAA-589 / NCTC 13251).